We begin with the raw amino-acid sequence, 272 residues long: Putative phosphoenolpyruvate synthase regulatory protein (272 aa).

Residue 152–159 (GVSRCGKT) participates in ADP binding.

It belongs to the pyruvate, phosphate/water dikinase regulatory protein family. PSRP subfamily.

The catalysed reaction is [pyruvate, water dikinase] + ADP = [pyruvate, water dikinase]-phosphate + AMP + H(+). It carries out the reaction [pyruvate, water dikinase]-phosphate + phosphate + H(+) = [pyruvate, water dikinase] + diphosphate. Functionally, bifunctional serine/threonine kinase and phosphorylase involved in the regulation of the phosphoenolpyruvate synthase (PEPS) by catalyzing its phosphorylation/dephosphorylation. The chain is Putative phosphoenolpyruvate synthase regulatory protein from Stutzerimonas stutzeri (strain A1501) (Pseudomonas stutzeri).